Here is a 513-residue protein sequence, read N- to C-terminus: Plexin domain-containing protein 2 (513 aa).

A signal peptide spans 1–24 (MGARSESLVGVVLLFQLLADRLWC). Topologically, residues 25–438 (AATASDSLYD…AEMKTGTLHT (414 aa)) are extracellular. N-linked (GlcNAc...) asparagine glycosylation is found at Asn-88, Asn-145, Asn-198, Asn-206, Asn-222, and Asn-330. The PSI domain maps to 312–357 (TCLQFNSCSSCVSSMIGFNCSWCNIPQRCSSGFDRHRQDWVENGCT). Residues 439–459 (GLIIGILILVLLIITAILVAV) traverse the membrane as a helical segment. The Cytoplasmic portion of the chain corresponds to 460–513 (YMYHHPTSSASLFLIERRPSRWPAMKFRRGSGHPAYAEVEPIGEKEGFIVSEQC).

Belongs to the plexin family.

It is found in the membrane. This chain is Plexin domain-containing protein 2 (plxdc2), found in Xenopus laevis (African clawed frog).